The sequence spans 383 residues: MAKHLFTSESVSEGHPDKIADQISDAVLDAILAQDPKARVACETYVKTGMVLVGGEVTTSAWVDIEEITRKTVREIGYTHSDMGFDADSCAVLNAIGKQSPDINQGVDRADPAEQGAGDQGLMFGYANNETDVLMPAPITYAHALVKRQSEVRKNGTLPWLRPDAKSQVTFAYDDGKIVGIDAVVLSTQHRDDVSQADLIEGVMETIIKPVLPAQWLNKDTKFFINPTGRFVIGGPVGDCGLTGRKIIVDTYGGMARHGGGAFSGKDPSKVDRSAAYAARYVAKNIVAAGLADRCEIQVSYAIGVAEPTSISIETFGTGKVSEDLLIKLVRQHFELRPYGLTAMLDLARPIYQATAAYGHFGRNEFPWEATDKAEALRADAGL.

His-15 contacts ATP. Residue Asp-17 participates in Mg(2+) binding. Position 43 (Glu-43) interacts with K(+). L-methionine is bound by residues Glu-56 and Gln-99. The tract at residues 99–109 (QSPDINQGVDR) is flexible loop. ATP-binding positions include 164 to 166 (DAK), 230 to 231 (RF), Asp-239, 245 to 246 (RK), Ala-262, and Lys-266. Residue Asp-239 coordinates L-methionine. Lys-270 lines the L-methionine pocket.

It belongs to the AdoMet synthase family. Homotetramer; dimer of dimers. Requires Mg(2+) as cofactor. K(+) serves as cofactor.

It localises to the cytoplasm. The catalysed reaction is L-methionine + ATP + H2O = S-adenosyl-L-methionine + phosphate + diphosphate. It participates in amino-acid biosynthesis; S-adenosyl-L-methionine biosynthesis; S-adenosyl-L-methionine from L-methionine: step 1/1. Catalyzes the formation of S-adenosylmethionine (AdoMet) from methionine and ATP. The overall synthetic reaction is composed of two sequential steps, AdoMet formation and the subsequent tripolyphosphate hydrolysis which occurs prior to release of AdoMet from the enzyme. This is S-adenosylmethionine synthase from Shewanella baltica (strain OS223).